The primary structure comprises 165 residues: 3-isopropylmalate dehydratase small subunit (165 aa).

This sequence belongs to the LeuD family. LeuD type 2 subfamily. As to quaternary structure, heterodimer of LeuC and LeuD.

It catalyses the reaction (2R,3S)-3-isopropylmalate = (2S)-2-isopropylmalate. It participates in amino-acid biosynthesis; L-leucine biosynthesis; L-leucine from 3-methyl-2-oxobutanoate: step 2/4. In terms of biological role, catalyzes the isomerization between 2-isopropylmalate and 3-isopropylmalate, via the formation of 2-isopropylmaleate. The chain is 3-isopropylmalate dehydratase small subunit from Saccharolobus islandicus (strain Y.N.15.51 / Yellowstone #2) (Sulfolobus islandicus).